The following is a 407-amino-acid chain: Keratin, type I cuticular Ha2 (407 aa).

Residues 1–55 are head; that stretch reads MPSVCMPTTYRPASCLSKTYLSSSCQPSNRRPTGCISSSMGTYGLFCEGAFNGNE. The IF rod domain maps to 55–366; sequence EKETMQVLND…GLLESEDSKL (312 aa). The tract at residues 56–90 is coil 1A; it reads KETMQVLNDRLANYLEKVRQLEKENAELEGKIQDV. Positions 91 to 101 are linker 1; it reads YQGQVLTMCPD. A coil 1B region spans residues 102-202; the sequence is YQSYFQTIEE…HEEEVGVLRQ (101 aa). The segment at 203 to 218 is linker 12; it reads QLGDRLNIEVDAAPPV. Residues 219-362 form a coil 2 region; it reads DLTRMLEEMR…DTYRGLLESE (144 aa). The segment at 363–407 is tail; it reads DSKLPCNPCSTPSCQPCAPSPGVSRTVCVPHTVCVPCSPCLQTRY.

This sequence belongs to the intermediate filament family. In terms of tissue distribution, cuticle of the hair shaft.

The sequence is that of Keratin, type I cuticular Ha2 (Krt32) from Mus musculus (Mouse).